Consider the following 430-residue polypeptide: Dihydroorotase (430 aa).

Zn(2+) contacts are provided by histidine 60 and histidine 62. Substrate is bound by residues 62 to 64 (HLR) and asparagine 94. Zn(2+) contacts are provided by aspartate 152, histidine 179, histidine 232, and aspartate 305. Residue aspartate 305 is part of the active site. Residues histidine 309 and 323-324 (FG) contribute to the substrate site.

Belongs to the metallo-dependent hydrolases superfamily. DHOase family. Class I DHOase subfamily. Zn(2+) serves as cofactor.

It catalyses the reaction (S)-dihydroorotate + H2O = N-carbamoyl-L-aspartate + H(+). It participates in pyrimidine metabolism; UMP biosynthesis via de novo pathway; (S)-dihydroorotate from bicarbonate: step 3/3. Its function is as follows. Catalyzes the reversible cyclization of carbamoyl aspartate to dihydroorotate. This chain is Dihydroorotase, found in Solibacter usitatus (strain Ellin6076).